Consider the following 462-residue polypeptide: MALSMKMRANARVVSGRRVAAVAPRVVPFSSVARPVLRSTFAPEVSIDIRRAGRSRIVVEAVKKSVGDLGKADLEGKRVFVRADLNVPLDKKTLAITDDTRIRAAVPTLKYLLDNGAKVLLTSHLGRPKGGPEDKYRLTPVVARLSELLGKEVKKVDDCIGPSVEQAVASLKSGELLLLENVRFYKEEEKNDPEFAKKLASNADLYVNDAFGTAHRAHASTEGVTKFLKPSVAGFLLQKELDYLDGAVSAPKRPFVAIVGGSKVSSKITVIEKLMEKCDKIIIGGGMIFTFYKARGLKVGSSLVEEDKLELAKNLEAIAKAKGVQLLLPSDVVVADKFDANANTQTVSVEAIPDGWMGLDIGPDSIKTFQDALADAKTVVWNGPMGVFEFPKFAVGTVAIANTLSELTPKGAITIIGGGDSVAAVEQAGVAEKMSHISTGGGASLELLEGKVLPGVAALDEK.

A chloroplast-targeting transit peptide spans 1 to 61; that stretch reads MALSMKMRAN…AGRSRIVVEA (61 aa). (2R)-3-phosphoglycerate is bound by residues A83, D84, N86, R101, S123, H124, G126, R127, R183, H215, and R216. G261 contributes to the ADP binding site. A CDP-binding site is contributed by G261. AMP-binding residues include K263 and K267. K267 is a binding site for ATP. G285 provides a ligand contact to ADP. G285 contacts CDP. AMP contacts are provided by G286 and G358. Residues G286 and G358 each contribute to the ATP site. Residues G383 and F388 each contribute to the CDP site. F388 provides a ligand contact to ADP. E389 is an AMP binding site. 3 residues coordinate ATP: E389, D420, and S421. A Mg(2+)-binding site is contributed by D420.

Belongs to the phosphoglycerate kinase family. Monomer. Mg(2+) is required as a cofactor.

The protein resides in the plastid. It localises to the chloroplast. The catalysed reaction is (2R)-3-phosphoglycerate + ATP = (2R)-3-phospho-glyceroyl phosphate + ADP. It functions in the pathway carbohydrate biosynthesis; Calvin cycle. The polypeptide is Phosphoglycerate kinase, chloroplastic (PGK) (Volvox carteri (Green alga)).